A 299-amino-acid chain; its full sequence is Mitochondrial 2-oxodicarboxylate carrier (299 aa).

3 Solcar repeats span residues 11 to 100 (REAS…YKKL), 107 to 196 (SPAL…VKNM), and 205 to 294 (LEFL…TYSW). Helical transmembrane passes span 17–37 (IVAG…LDVV), 70–89 (FGFY…KRAV), 113–133 (TIAG…FEVV), 167–187 (GLNK…MVYF), 205–225 (LEFL…SVIN), and 277–297 (LGPG…WLQE).

The protein belongs to the mitochondrial carrier (TC 2.A.29) family.

It is found in the mitochondrion inner membrane. The catalysed reaction is 2-oxoadipate(in) + 2-oxoglutarate(out) = 2-oxoadipate(out) + 2-oxoglutarate(in). It catalyses the reaction hexanedioate(in) + 2-oxoglutarate(out) = hexanedioate(out) + 2-oxoglutarate(in). It carries out the reaction L-2-aminoadipate(in) + 2-oxoglutarate(out) = L-2-aminoadipate(out) + 2-oxoglutarate(in). The enzyme catalyses glutarate(in) + 2-oxoglutarate(out) = glutarate(out) + 2-oxoglutarate(in). The catalysed reaction is 2-oxoheptanedioate(in) + 2-oxoglutarate(out) = 2-oxoheptanedioate(out) + 2-oxoglutarate(in). It catalyses the reaction heptanedioate(in) + 2-oxoglutarate(out) = heptanedioate(out) + 2-oxoglutarate(in). It carries out the reaction citrate(in) + 2-oxoglutarate(out) = citrate(out) + 2-oxoglutarate(in). Its function is as follows. Transports dicarboxylates across the inner membranes of mitochondria by a counter-exchange mechanism. Can transport 2-oxoadipate (2-oxohexanedioate), 2-oxoglutarate, adipate (hexanedioate), glutarate, and to a lesser extent, pimelate (heptanedioate), 2-oxopimelate (2-oxoheptanedioate), 2-aminoadipate (2-aminohexanedioate), oxaloacetate, and citrate. Plays a central role in catabolism of lysine, hydroxylysine, and tryptophan, by transporting common metabolite intermediates (such as 2-oxoadipate) into the mitochondria, where it is converted into acetyl-CoA and can enter the citric acid (TCA) cycle. The polypeptide is Mitochondrial 2-oxodicarboxylate carrier (SLC25A21) (Pongo abelii (Sumatran orangutan)).